Consider the following 124-residue polypeptide: Small ribosomal subunit protein uS12 (124 aa).

At Asp-89 the chain carries 3-methylthioaspartic acid. The interval Leu-104–Lys-124 is disordered. Positions Ser-113–Lys-124 are enriched in basic residues.

This sequence belongs to the universal ribosomal protein uS12 family. Part of the 30S ribosomal subunit. Contacts proteins S8 and S17. May interact with IF1 in the 30S initiation complex.

With S4 and S5 plays an important role in translational accuracy. In terms of biological role, interacts with and stabilizes bases of the 16S rRNA that are involved in tRNA selection in the A site and with the mRNA backbone. Located at the interface of the 30S and 50S subunits, it traverses the body of the 30S subunit contacting proteins on the other side and probably holding the rRNA structure together. The combined cluster of proteins S8, S12 and S17 appears to hold together the shoulder and platform of the 30S subunit. This Thiomonas delicata (Thiomonas cuprina) protein is Small ribosomal subunit protein uS12.